The primary structure comprises 445 residues: NADH-quinone oxidoreductase subunit F (445 aa).

Residue 61–70 (GRGGAGFSTG) coordinates NAD(+). 174–221 (GAGRYICGEETALINSLEGRRANPRSKPPFPATSGVWGKPTCVNNVET) contacts FMN. Residues Cys351, Cys354, Cys357, and Cys398 each coordinate [4Fe-4S] cluster.

The protein belongs to the complex I 51 kDa subunit family. Composed of 13 different subunits. Subunits NuoCD, E, F, and G constitute the peripheral sector of the complex. FMN is required as a cofactor. [4Fe-4S] cluster serves as cofactor.

The catalysed reaction is a quinone + NADH + 5 H(+)(in) = a quinol + NAD(+) + 4 H(+)(out). Functionally, NDH-1 shuttles electrons from NADH, via FMN and iron-sulfur (Fe-S) centers, to quinones in the respiratory chain. The immediate electron acceptor for the enzyme in this species is believed to be ubiquinone. Couples the redox reaction to proton translocation (for every two electrons transferred, four hydrogen ions are translocated across the cytoplasmic membrane), and thus conserves the redox energy in a proton gradient. The polypeptide is NADH-quinone oxidoreductase subunit F (nuoF) (Salmonella typhimurium (strain LT2 / SGSC1412 / ATCC 700720)).